We begin with the raw amino-acid sequence, 443 residues long: Xaa-Pro dipeptidase (443 aa).

Mn(2+) is bound by residues Asp246, Asp257, His339, Glu384, and Glu423.

The protein belongs to the peptidase M24B family. Bacterial-type prolidase subfamily. The cofactor is Mn(2+).

The enzyme catalyses Xaa-L-Pro dipeptide + H2O = an L-alpha-amino acid + L-proline. In terms of biological role, splits dipeptides with a prolyl residue in the C-terminal position. The chain is Xaa-Pro dipeptidase from Klebsiella pneumoniae subsp. pneumoniae (strain ATCC 700721 / MGH 78578).